The sequence spans 638 residues: Threonine--tRNA ligase (638 aa).

The TGS domain maps to 1-61 (MPEITLPDGS…DNDSKVVIIT (61 aa)). A catalytic region spans residues 242-533 (DHRKLGKKHS…LIEQYEAKFP (292 aa)). Zn(2+) is bound by residues Cys333, His384, and His510.

Belongs to the class-II aminoacyl-tRNA synthetase family. Homodimer. It depends on Zn(2+) as a cofactor.

The protein resides in the cytoplasm. The enzyme catalyses tRNA(Thr) + L-threonine + ATP = L-threonyl-tRNA(Thr) + AMP + diphosphate + H(+). In terms of biological role, catalyzes the attachment of threonine to tRNA(Thr) in a two-step reaction: L-threonine is first activated by ATP to form Thr-AMP and then transferred to the acceptor end of tRNA(Thr). Also edits incorrectly charged L-seryl-tRNA(Thr). The chain is Threonine--tRNA ligase from Prochlorococcus marinus subsp. pastoris (strain CCMP1986 / NIES-2087 / MED4).